The primary structure comprises 134 residues: Pre-histone-like nucleoprotein (134 aa).

Residues 2–23 (AILISPTNNTGWGLGTHKLFGG) constitute a propeptide that is removed on maturation. The disordered stretch occupies residues 40–62 (RASWGSKGRRRRQGRARGAPLDP). The Nuclear localization signal motif lies at 125 to 134 (KRKRRVRFRQ).

It belongs to the adenoviridae histone-like nucleoprotein family. In terms of assembly, interacts with the core-capsid bridging protein; this interaction bridges the virus core to the capsid. Interacts with host NPM1; this interaction might play a role in placing the pre-histone-like nucleoprotein on the viral DNA or regulating viral gene expression. Interacts with host HMGB1; this interaction inhibits host immune response. In terms of processing, cleaved near the N-terminus by the viral protease during virion maturation to form the mature protein.

Its subcellular location is the virion. The protein resides in the host nucleus. The protein localises to the host nucleolus. Functionally, plays a role in the inhibition of host immune response within the nucleus. Interacts with cellular nucleosomes and immobilizes the host immune danger signal HMGB1 on chromatin. In turn, prevents HMGB1 release out of the cell and thus decreases inflammation. Also plays a role in the wrapping and condensation of the viral DNA. May also promote viral genome import into the nucleus. The chain is Pre-histone-like nucleoprotein from Canis lupus familiaris (Dog).